Consider the following 140-residue polypeptide: Thymic stromal lymphopoietin (140 aa).

The N-terminal stretch at 1–19 is a signal peptide; the sequence is MVLLRSLFILQVLVRMGLT. 2 N-linked (GlcNAc...) asparagine glycosylation sites follow: asparagine 21 and asparagine 26. 3 disulfide bridges follow: cysteine 25/cysteine 98, cysteine 57/cysteine 63, and cysteine 78/cysteine 121. Asparagine 123 carries an N-linked (GlcNAc...) asparagine glycan.

Interacts with a receptor composed of CRLF2 and IL7R. Binding of TSLP to CRLF2/TSLPR is a mechanistic prerequisite for recruitment of IL7R to the high-affinity ternary complex.

It localises to the secreted. In terms of biological role, cytokine that induces the release of T-cell-attracting chemokines from monocytes and, in particular, enhances the maturation of CD11c(+) dendritic cells. Can induce allergic inflammation by directly activating mast cells. This is Thymic stromal lymphopoietin (Tslp) from Mus musculus (Mouse).